Reading from the N-terminus, the 163-residue chain is Transcription elongation factor GreB (163 aa).

Residues 54–76 (GKRRMREIDRRIRFLTKRLEAAV) are a coiled coil.

This sequence belongs to the GreA/GreB family. GreB subfamily.

Its function is as follows. Necessary for efficient RNA polymerase transcription elongation past template-encoded arresting sites. The arresting sites in DNA have the property of trapping a certain fraction of elongating RNA polymerases that pass through, resulting in locked ternary complexes. Cleavage of the nascent transcript by cleavage factors such as GreA or GreB allows the resumption of elongation from the new 3'terminus. GreB releases sequences of up to 9 nucleotides in length. In Neisseria meningitidis serogroup A / serotype 4A (strain DSM 15465 / Z2491), this protein is Transcription elongation factor GreB.